The following is a 616-amino-acid chain: Matrix metalloproteinase-21 (616 aa).

Positions 1 to 22 (MPTAPALGALLLLLGALTPGHQ) are cleaved as a signal peptide. The propeptide occupies 23-192 (EKLFHSRDHS…TSTSKIRKKR (170 aa)). The Cysteine switch motif lies at 139–146 (PRCGVPDN). Cys141 lines the Zn(2+) pocket. Residues 157 to 186 (SNSNNVTEKASGKSLNTTTNQNPENGTSTS) are disordered. 3 N-linked (GlcNAc...) asparagine glycosylation sites follow: Asn161, Asn172, and Asn181. Position 329 (His329) interacts with Zn(2+). Glu330 is an active-site residue. The Zn(2+) site is built by His333 and His339. Cys375 and Cys606 are joined by a disulfide. 4 Hemopexin repeats span residues 376–435 (EGSF…WHGI), 437–493 (AEGI…FPKI), 494–542 (PSPI…FPAV), and 549–605 (FGNI…WTDI). Asn418 carries N-linked (GlcNAc...) asparagine glycosylation. An N-linked (GlcNAc...) asparagine glycan is attached at Asn597.

The protein belongs to the peptidase M10A family. Zn(2+) serves as cofactor. It depends on Ca(2+) as a cofactor. Post-translationally, the precursor is cleaved by a furin endopeptidase.

It localises to the secreted. In terms of biological role, may play a role in gastrulation-related cell movement. Plays a specialized role in the generation of left-right asymmetry during embryogenesis. May act as a negative regulator of the NOTCH-signaling pathway. In Cynops pyrrhogaster (Japanese fire-bellied newt), this protein is Matrix metalloproteinase-21 (MMP21).